A 415-amino-acid chain; its full sequence is Phosphoribosylamine--glycine ligase (415 aa).

One can recognise an ATP-grasp domain in the interval 108-311 (KKIMEKYNIP…LMQHIIDLDE (204 aa)). An ATP-binding site is contributed by 134-191 (IENCELPVVVKKDGLAAGKGVIIADTIEAARSAIEIMYGDEEEGTVVFETFLEGEEFS). 2 residues coordinate Mg(2+): E281 and N283.

It belongs to the GARS family. Mg(2+) serves as cofactor. Mn(2+) is required as a cofactor.

It catalyses the reaction 5-phospho-beta-D-ribosylamine + glycine + ATP = N(1)-(5-phospho-beta-D-ribosyl)glycinamide + ADP + phosphate + H(+). The protein operates within purine metabolism; IMP biosynthesis via de novo pathway; N(1)-(5-phospho-D-ribosyl)glycinamide from 5-phospho-alpha-D-ribose 1-diphosphate: step 2/2. This Staphylococcus aureus (strain COL) protein is Phosphoribosylamine--glycine ligase.